The primary structure comprises 349 residues: tRNA pseudouridine synthase D (349 aa).

Position 27 (F27) interacts with substrate. Residue D80 is the Nucleophile of the active site. Position 129 (N129) interacts with substrate. Residues 155–303 form the TRUD domain; that stretch reads GVPNYFGAQR…VEASRRAMLL (149 aa). F329 is a substrate binding site.

Belongs to the pseudouridine synthase TruD family.

It catalyses the reaction uridine(13) in tRNA = pseudouridine(13) in tRNA. Its function is as follows. Responsible for synthesis of pseudouridine from uracil-13 in transfer RNAs. The chain is tRNA pseudouridine synthase D from Salmonella choleraesuis (strain SC-B67).